We begin with the raw amino-acid sequence, 195 residues long: Sec-independent protein translocase protein TatB (195 aa).

The helical transmembrane segment at 1–21 threads the bilayer; sequence MFDIGFSELVLIFIVGLVVLG. The interval 166–195 is disordered; sequence DESQFAAYYPPDDDLASPTPSQPQDKQNVS. Polar residues predominate over residues 183–195; that stretch reads PTPSQPQDKQNVS.

The protein belongs to the TatB family. In terms of assembly, the Tat system comprises two distinct complexes: a TatABC complex, containing multiple copies of TatA, TatB and TatC subunits, and a separate TatA complex, containing only TatA subunits. Substrates initially bind to the TatABC complex, which probably triggers association of the separate TatA complex to form the active translocon.

It is found in the cell inner membrane. Functionally, part of the twin-arginine translocation (Tat) system that transports large folded proteins containing a characteristic twin-arginine motif in their signal peptide across membranes. Together with TatC, TatB is part of a receptor directly interacting with Tat signal peptides. TatB may form an oligomeric binding site that transiently accommodates folded Tat precursor proteins before their translocation. In Actinobacillus pleuropneumoniae serotype 5b (strain L20), this protein is Sec-independent protein translocase protein TatB.